Reading from the N-terminus, the 158-residue chain is NADPH-dependent 7-cyano-7-deazaguanine reductase (158 aa).

The active-site Thioimide intermediate is the C56. Catalysis depends on D63, which acts as the Proton donor. Substrate contacts are provided by residues 78-80 (VES) and 97-98 (HE).

It belongs to the GTP cyclohydrolase I family. QueF type 1 subfamily.

Its subcellular location is the cytoplasm. The catalysed reaction is 7-aminomethyl-7-carbaguanine + 2 NADP(+) = 7-cyano-7-deazaguanine + 2 NADPH + 3 H(+). The protein operates within tRNA modification; tRNA-queuosine biosynthesis. In terms of biological role, catalyzes the NADPH-dependent reduction of 7-cyano-7-deazaguanine (preQ0) to 7-aminomethyl-7-deazaguanine (preQ1). This is NADPH-dependent 7-cyano-7-deazaguanine reductase from Rhodopseudomonas palustris (strain BisB5).